Here is a 552-residue protein sequence, read N- to C-terminus: Putative transport protein HSM_0534 (552 aa).

The next 5 membrane-spanning stretches (helical) occupy residues isoleucine 4–tryptophan 24, glycine 28–asparagine 48, leucine 67–leucine 87, glycine 95–valine 115, and methionine 157–isoleucine 177. RCK C-terminal domains follow at residues lysine 190 to glutamate 275 and isoleucine 277 to asparagine 360. The next 6 membrane-spanning stretches (helical) occupy residues methionine 370–isoleucine 390, alanine 402–phenylalanine 424, isoleucine 438–valine 458, leucine 463–isoleucine 483, leucine 495–isoleucine 515, and valine 529–tryptophan 549.

It belongs to the AAE transporter (TC 2.A.81) family. YidE subfamily.

The protein localises to the cell membrane. In Histophilus somni (strain 2336) (Haemophilus somnus), this protein is Putative transport protein HSM_0534.